The sequence spans 207 residues: Small ribosomal subunit protein uS4 (207 aa).

The segment at D30–N54 is disordered. A compositionally biased stretch (polar residues) spans G42–G53. The S4 RNA-binding domain occupies S97–L160.

It belongs to the universal ribosomal protein uS4 family. Part of the 30S ribosomal subunit. Contacts protein S5. The interaction surface between S4 and S5 is involved in control of translational fidelity.

Its function is as follows. One of the primary rRNA binding proteins, it binds directly to 16S rRNA where it nucleates assembly of the body of the 30S subunit. With S5 and S12 plays an important role in translational accuracy. This is Small ribosomal subunit protein uS4 from Cupriavidus taiwanensis (strain DSM 17343 / BCRC 17206 / CCUG 44338 / CIP 107171 / LMG 19424 / R1) (Ralstonia taiwanensis (strain LMG 19424)).